A 395-amino-acid polypeptide reads, in one-letter code: Elongation factor Tu (395 aa).

Positions 6–205 (KPHINVGTIG…NALEKIDLPI (200 aa)) constitute a tr-type G domain. Residues 15 to 22 (GHVDHGKT) are G1. 15-22 (GHVDHGKT) is a binding site for GTP. Residue Thr22 coordinates Mg(2+). A G2 region spans residues 59-63 (GITIS). A G3 region spans residues 80 to 83 (DCPG). GTP is bound by residues 80–84 (DCPGH) and 135–138 (NKCD). The segment at 135 to 138 (NKCD) is G4. Residues 173–175 (SAV) form a G5 region.

It belongs to the TRAFAC class translation factor GTPase superfamily. Classic translation factor GTPase family. EF-Tu/EF-1A subfamily. In terms of assembly, monomer.

It localises to the cytoplasm. It carries out the reaction GTP + H2O = GDP + phosphate + H(+). Functionally, GTP hydrolase that promotes the GTP-dependent binding of aminoacyl-tRNA to the A-site of ribosomes during protein biosynthesis. The chain is Elongation factor Tu from Ehrlichia ruminantium (strain Gardel).